The chain runs to 461 residues: MKLWGGRFKKGTDKLVNDFNSSINVDSRMYKEDIEGSLAHASMLGNQNIISKEASDRITSGLLEILKRMDNGVIEIDETSEDIHSFVEGTLTYYIGEYGKMLHTGRSRNDQVTLDLRLYLKKAITSLKQDIIALEEVLLEKANENIGTIMPGYTHMQKAQPITFAHHLLAYAEMFKRDLGRLSDCYKRVDEMPLGSGALATSTYPIDREAVARDLGFSKVTLNSLDSVSDRDYAIETLSCLSMIMMHLSRFSEEIILWCTNEFSFIELDDGYSTGSSIMPQKKNPDVAELVRGKTGRVYGDLMTLLTVMKGIPLAYNKDMQEDKEALFDGLDTVVLSLKTFCGMIKTMKVKKENMRKGAGLGFTNATDVADYLVKKGMPFRNAHEVVGEIVLQCIKDNKMIEELTMEEFKNFSPTFEEDIYHAIDLLTCVEERKVIGGPSTESVKIQIEALKNFIAENKEV.

The protein belongs to the lyase 1 family. Argininosuccinate lyase subfamily.

The protein resides in the cytoplasm. It catalyses the reaction 2-(N(omega)-L-arginino)succinate = fumarate + L-arginine. The protein operates within amino-acid biosynthesis; L-arginine biosynthesis; L-arginine from L-ornithine and carbamoyl phosphate: step 3/3. This is Argininosuccinate lyase from Clostridium beijerinckii (strain ATCC 51743 / NCIMB 8052) (Clostridium acetobutylicum).